A 95-amino-acid polypeptide reads, in one-letter code: Protein TusB (95 aa).

It belongs to the DsrH/TusB family. Heterohexamer, formed by a dimer of trimers. The hexameric TusBCD complex contains 2 copies each of TusB, TusC and TusD. The TusBCD complex interacts with TusE.

It is found in the cytoplasm. Part of a sulfur-relay system required for 2-thiolation of 5-methylaminomethyl-2-thiouridine (mnm(5)s(2)U) at tRNA wobble positions. The sequence is that of Protein TusB from Enterobacter sp. (strain 638).